Here is a 149-residue protein sequence, read N- to C-terminus: Calmodulin (149 aa).

Ala-2 carries the post-translational modification N-acetylalanine. EF-hand domains are found at residues 8–43 (EQIS…LGQN), 44–79 (PTEA…KMRD), 81–116 (DSEE…LGEK), and 117–149 (LTDN…MLSK). Positions 21, 23, 25, 27, 32, 57, 59, 61, 63, 68, 94, 96, 98, 100, 105, 130, 132, 134, 136, and 141 each coordinate Ca(2+).

It belongs to the calmodulin family. Post-translationally, trimethylation of Lys-116 observed in other calmodulins is absent here.

Its function is as follows. Calmodulin mediates the control of a large number of enzymes, ion channels and other proteins by Ca(2+). Among the enzymes to be stimulated by the calmodulin-Ca(2+) complex are a number of protein kinases and phosphatases. In Pleurotus cornucopiae (Cornucopia mushroom), this protein is Calmodulin (CMD1).